The sequence spans 101 residues: Protein translation factor SUI1 homolog (101 aa).

This sequence belongs to the SUI1 family.

The protein is Protein translation factor SUI1 homolog of Methanoregula boonei (strain DSM 21154 / JCM 14090 / 6A8).